We begin with the raw amino-acid sequence, 255 residues long: Phycoerythrobilin:ferredoxin oxidoreductase (255 aa).

This sequence belongs to the HY2 family.

It carries out the reaction (3Z)-phycoerythrobilin + oxidized 2[4Fe-4S]-[ferredoxin] = 15,16-dihydrobiliverdin + reduced 2[4Fe-4S]-[ferredoxin] + 2 H(+). Catalyzes the two-electron reduction of the C2 and C3(1) diene system of 15,16-dihydrobiliverdin. In Nostoc punctiforme (strain ATCC 29133 / PCC 73102), this protein is Phycoerythrobilin:ferredoxin oxidoreductase (pebB).